The following is a 73-amino-acid chain: MSNPCQKEACAIQDCLLSHQYDDAKCAKVIDQLYICCSKFYKDNGKDSRSPCCPLPSLLELKMKQRKLTPGDS.

A CHCH domain is found at 2 to 44 (SNPCQKEACAIQDCLLSHQYDDAKCAKVIDQLYICCSKFYKDN). Short sequence motifs (cx9C motif) lie at residues 5 to 15 (CQKEACAIQDC) and 26 to 36 (CAKVIDQLYIC). Disulfide bonds link cysteine 5-cysteine 36 and cysteine 15-cysteine 26.

It belongs to the CMC4 family.

Its subcellular location is the mitochondrion intermembrane space. The sequence is that of Cx9C motif-containing protein 4, mitochondrial (CMC4) from Saccharomyces cerevisiae (strain RM11-1a) (Baker's yeast).